The sequence spans 134 residues: Ribonuclease P protein component (134 aa).

Belongs to the RnpA family. Consists of a catalytic RNA component (M1 or rnpB) and a protein subunit.

It carries out the reaction Endonucleolytic cleavage of RNA, removing 5'-extranucleotides from tRNA precursor.. In terms of biological role, RNaseP catalyzes the removal of the 5'-leader sequence from pre-tRNA to produce the mature 5'-terminus. It can also cleave other RNA substrates such as 4.5S RNA. The protein component plays an auxiliary but essential role in vivo by binding to the 5'-leader sequence and broadening the substrate specificity of the ribozyme. The sequence is that of Ribonuclease P protein component from Pseudomonas putida (strain GB-1).